Consider the following 299-residue polypeptide: ATP phosphoribosyltransferase (299 aa).

Belongs to the ATP phosphoribosyltransferase family. Long subfamily. Equilibrium between an active dimeric form, an inactive hexameric form and higher aggregates. Interconversion between the various forms is largely reversible and is influenced by the natural substrates and inhibitors of the enzyme. Mg(2+) serves as cofactor.

The protein localises to the cytoplasm. It carries out the reaction 1-(5-phospho-beta-D-ribosyl)-ATP + diphosphate = 5-phospho-alpha-D-ribose 1-diphosphate + ATP. Its pathway is amino-acid biosynthesis; L-histidine biosynthesis; L-histidine from 5-phospho-alpha-D-ribose 1-diphosphate: step 1/9. Its activity is regulated as follows. Feedback inhibited by histidine. In terms of biological role, catalyzes the condensation of ATP and 5-phosphoribose 1-diphosphate to form N'-(5'-phosphoribosyl)-ATP (PR-ATP). Has a crucial role in the pathway because the rate of histidine biosynthesis seems to be controlled primarily by regulation of HisG enzymatic activity. This chain is ATP phosphoribosyltransferase, found in Salmonella enteritidis PT4 (strain P125109).